The sequence spans 347 residues: N-acetyl-gamma-glutamyl-phosphate reductase (347 aa).

Residue Cys155 is part of the active site.

The protein belongs to the NAGSA dehydrogenase family. Type 1 subfamily.

Its subcellular location is the cytoplasm. The catalysed reaction is N-acetyl-L-glutamate 5-semialdehyde + phosphate + NADP(+) = N-acetyl-L-glutamyl 5-phosphate + NADPH + H(+). Its pathway is amino-acid biosynthesis; L-arginine biosynthesis; N(2)-acetyl-L-ornithine from L-glutamate: step 3/4. Catalyzes the NADPH-dependent reduction of N-acetyl-5-glutamyl phosphate to yield N-acetyl-L-glutamate 5-semialdehyde. The sequence is that of N-acetyl-gamma-glutamyl-phosphate reductase from Akkermansia muciniphila (strain ATCC BAA-835 / DSM 22959 / JCM 33894 / BCRC 81048 / CCUG 64013 / CIP 107961 / Muc).